Reading from the N-terminus, the 160-residue chain is Glyoxalase domain-containing protein 5 (160 aa).

One can recognise a VOC domain in the interval 33 to 153; that stretch reads RLDHLVLTVR…DQNLIEVSNY (121 aa).

It belongs to the glyoxalase I family.

In Xenopus tropicalis (Western clawed frog), this protein is Glyoxalase domain-containing protein 5 (glod5).